A 101-amino-acid polypeptide reads, in one-letter code: Glutaredoxin-1 (101 aa).

In terms of domain architecture, Glutaredoxin spans 5–101 (KDRVEKLIQT…GSLSKMIAAL (97 aa)). Cys-25 and Cys-28 are oxidised to a cystine.

Belongs to the glutaredoxin family.

The protein resides in the cytoplasm. It is found in the cytosol. Its function is as follows. Multifunctional enzyme with glutathione-dependent oxidoreductase, glutathione peroxidase and glutathione S-transferase (GST) activity. The disulfide bond functions as an electron carrier in the glutathione-dependent synthesis of deoxyribonucleotides by the enzyme ribonucleotide reductase. In addition, it is also involved in reducing cytosolic protein- and non-protein-disulfides in a coupled system with glutathione reductase. May play a role in protection against oxidative stress caused by superoxide in vivo by regulating the redox state of the protein sulfhydryl groups. This Rhizophagus irregularis (strain DAOM 181602 / DAOM 197198 / MUCL 43194) (Arbuscular mycorrhizal fungus) protein is Glutaredoxin-1.